The primary structure comprises 210 residues: Thymidylate kinase (210 aa).

An ATP-binding site is contributed by 9–16 (GLEGAGKS).

This sequence belongs to the thymidylate kinase family.

It carries out the reaction dTMP + ATP = dTDP + ADP. In terms of biological role, phosphorylation of dTMP to form dTDP in both de novo and salvage pathways of dTTP synthesis. The polypeptide is Thymidylate kinase (Aliivibrio fischeri (strain ATCC 700601 / ES114) (Vibrio fischeri)).